The following is a 230-amino-acid chain: Ubiquitin carboxyl-terminal hydrolase isozyme L3 (230 aa).

Positions 5–229 (RWLPLEANPE…LRFNAIALSA (225 aa)) constitute a UCH catalytic domain. Positions 8–13 (PLEANP) are interaction with ubiquitin. Catalysis depends on Cys95, which acts as the Nucleophile. Ser130 is subject to Phosphoserine. Residues 152-159 (AHEGQTEA) are interaction with ubiquitin. Crossover loop which restricts access of large ubiquitin adducts to the active site. His169 functions as the Proton donor in the catalytic mechanism. Residues 219–224 (ELRFNA) are interaction with ubiquitin.

It belongs to the peptidase C12 family. Preferentially binds diubiquitin; the interaction does not hydrolyze diubiquitin but, in vitro, inhibits the hydrolyzing activity on other substrates.

It localises to the cytoplasm. It catalyses the reaction Thiol-dependent hydrolysis of ester, thioester, amide, peptide and isopeptide bonds formed by the C-terminal Gly of ubiquitin (a 76-residue protein attached to proteins as an intracellular targeting signal).. Its activity is regulated as follows. Inhibited by monoubiquitin and diubiquitin. Deubiquitinating enzyme (DUB) that controls levels of cellular ubiquitin through processing of ubiquitin precursors and ubiquitinated proteins. Thiol protease that recognizes and hydrolyzes a peptide bond at the C-terminal glycine of either ubiquitin or NEDD8. Has a 10-fold preference for Arg and Lys at position P3''. Deubiquitinates ENAC in apical compartments, thereby regulating apical membrane recycling. Indirectly increases the phosphorylation of IGFIR, AKT and FOXO1 and promotes insulin-signaling and insulin-induced adipogenesis. Required for stress-response retinal, skeletal muscle and germ cell maintenance. May be involved in working memory. Can hydrolyze UBB(+1), a mutated form of ubiquitin which is not effectively degraded by the proteasome. The sequence is that of Ubiquitin carboxyl-terminal hydrolase isozyme L3 (UCHL3) from Bos taurus (Bovine).